A 319-amino-acid chain; its full sequence is ATP-dependent 6-phosphofructokinase (319 aa).

Residue Gly11 participates in ATP binding. 21-25 is an ADP binding site; it reads RSIAR. Residues 72–73 and 102–105 contribute to the ATP site; these read RC and GDGS. Asp103 contacts Mg(2+). A substrate-binding site is contributed by 125 to 127; sequence TID. The Proton acceptor role is filled by Asp127. Arg154 is an ADP binding site. Residues Arg162 and 169 to 171 each bind substrate; that span reads MGR. Residues 185 to 187, Arg211, and 213 to 215 each bind ADP; these read GAE and KLH. Residues Glu222, Lys243, and 249–252 contribute to the substrate site; that span reads HVQR.

Belongs to the phosphofructokinase type A (PFKA) family. ATP-dependent PFK group I subfamily. Prokaryotic clade 'B1' sub-subfamily. In terms of assembly, homotetramer. It depends on Mg(2+) as a cofactor.

The protein resides in the cytoplasm. The enzyme catalyses beta-D-fructose 6-phosphate + ATP = beta-D-fructose 1,6-bisphosphate + ADP + H(+). Its pathway is carbohydrate degradation; glycolysis; D-glyceraldehyde 3-phosphate and glycerone phosphate from D-glucose: step 3/4. With respect to regulation, allosterically activated by ADP and other diphosphonucleosides, and allosterically inhibited by phosphoenolpyruvate. Functionally, catalyzes the phosphorylation of D-fructose 6-phosphate to fructose 1,6-bisphosphate by ATP, the first committing step of glycolysis. This is ATP-dependent 6-phosphofructokinase from Finegoldia magna (strain ATCC 29328 / DSM 20472 / WAL 2508) (Peptostreptococcus magnus).